The chain runs to 476 residues: Protein transport protein Sec61 subunit alpha isoform 1 (476 aa).

The Cytoplasmic segment spans residues 1 to 33 (MGIKFLEVIKPFCVILPEIQKPERKIQFKEKVL). A helical transmembrane segment spans residues 34 to 53 (WTAITLFIFLVCCQIPLFGI). Residues 54 to 76 (MSSDSADPFYWMRVILASNRGTL) lie on the Lumenal side of the membrane. A helical transmembrane segment spans residues 77-96 (MELGISPIVTSGLIMQLLAG). Residues 97–117 (AKIIEVGDTPKDRALFNGAQK) are Cytoplasmic-facing. Residues 118-138 (LFGMTITIGQSIVYVMTGMYG) form a helical membrane-spanning segment. The Lumenal segment spans residues 139–144 (DPSEMG). The chain crosses the membrane as a helical span at residues 145-165 (AGVCLLITIQLFVAGLIVLLL). Over 166–172 (DELLQKG) the chain is Cytoplasmic. The chain crosses the membrane as a helical span at residues 173 to 193 (YGLGSGISLFIATNICETIVW). At 194–240 (KAFSPTTVNTGRGMEFEGAIIALFHLLATRTDKVRALREAFYRQNLP) the chain is on the lumenal side. The chain crosses the membrane as a helical span at residues 241-261 (NLMNLIATIFVFAVVIYFQGF). Residues 262–288 (RVDLPIKSARYRGQYNTYPIKLFYTSN) lie on the Cytoplasmic side of the membrane. A helical membrane pass occupies residues 289-309 (IPIILQSALVSNLYVISQMLS). Residues 310–354 (ARFSGNLLVSLLGTWSDTSSGGPARAYPVGGLCYYLSPPESFGSV) are Lumenal-facing. Residues 355–375 (LEDPVHAVVYIVFMLGSCAFF) traverse the membrane as a helical segment. Topologically, residues 376–420 (SKTWIEVSGSSAKDVAKQLKEQQMVMRGHRETSMVHELNRYIPTA) are cytoplasmic. A helical transmembrane segment spans residues 421 to 441 (AAFGGLCIGALSVLADFLGAI). Residues 442–445 (GSGT) are Lumenal-facing. A helical transmembrane segment spans residues 446–462 (GILLAVTIIYQYFEIFV). Topologically, residues 463-476 (KEQSEVGSMGALLF) are cytoplasmic.

This sequence belongs to the SecY/SEC61-alpha family. In terms of assembly, the SEC61 channel-forming translocon complex consists of channel-forming core components SEC61A1, SEC61B and SEC61G and different auxiliary components such as SEC62 and SEC63. The SEC61 channel associates with the multi-pass translocon (MPT) complex.

The protein localises to the endoplasmic reticulum membrane. Functionally, component of SEC61 channel-forming translocon complex that mediates transport of signal peptide-containing precursor polypeptides across the endoplasmic reticulum (ER). Forms a ribosome receptor and a gated pore in the ER membrane, both functions required for cotranslational translocation of nascent polypeptides. May cooperate with auxiliary protein SEC62, SEC63 and HSPA5/BiP to enable post-translational transport of small presecretory proteins. The SEC61 channel is also involved in ER membrane insertion of transmembrane proteins: it mediates membrane insertion of the first few transmembrane segments of proteins, while insertion of subsequent transmembrane regions of multi-pass membrane proteins is mediated by the multi-pass translocon (MPT) complex. The SEC61 channel cooperates with the translocating protein TRAM1 to import nascent proteins into the ER. Controls the passive efflux of calcium ions from the ER lumen to the cytosol through SEC61 channel, contributing to the maintenance of cellular calcium homeostasis. Plays a critical role in nephrogenesis, specifically at pronephros stage. This Bos taurus (Bovine) protein is Protein transport protein Sec61 subunit alpha isoform 1 (SEC61A1).